The chain runs to 307 residues: Regulating synaptic membrane exocytosis protein 3 (307 aa).

A disordered region spans residues 86–120 (STETGIAVEMRSRVTRQGSRESTDGSTNSNSSEGT). A compositionally biased stretch (polar residues) spans 109-119 (DGSTNSNSSEG). Residues 155 to 273 (PMGDVHIAIM…DLSAVVTGWY (119 aa)) enclose the C2 domain. 2 positions are modified to phosphoserine: serine 294 and serine 297.

As to quaternary structure, binds PPFIA3. Does not bind RAB3. In terms of tissue distribution, expressed exclusively in brain with significant levels in cortex, cerebellum and olfactory bulb. Detected at lower level in hippocampus.

Its subcellular location is the synapse. Functionally, regulates synaptic membrane exocytosis. This Rattus norvegicus (Rat) protein is Regulating synaptic membrane exocytosis protein 3 (Rims3).